A 227-amino-acid polypeptide reads, in one-letter code: MSDKAVLSCRNLGKSYEEGPESVVVLSGLQLELHPGERVAIVGTSGSGKSTLLNLLGGLDTPSEGSVWLAGEELSALGEKARGLLRNRALGFVYQFHHLLPEFTALENVCMPLLIGRTAIPEARQRATALLERVGLGHRLAHKPSELSGGERQRVAIARALINQPGLVMLDEPTGNLDHHTAQGIQDLMRELSTSSRTAFLIVTHDMSLARQMDRILRLEGGRLVEA.

The ABC transporter domain maps to 7–227; the sequence is LSCRNLGKSY…RLEGGRLVEA (221 aa). An ATP-binding site is contributed by 43–50; it reads GTSGSGKS.

This sequence belongs to the ABC transporter superfamily. Lipoprotein translocase (TC 3.A.1.125) family. As to quaternary structure, the complex is composed of two ATP-binding proteins (LolD) and two transmembrane proteins (LolC and LolE).

Its subcellular location is the cell inner membrane. Part of the ABC transporter complex LolCDE involved in the translocation of mature outer membrane-directed lipoproteins, from the inner membrane to the periplasmic chaperone, LolA. Responsible for the formation of the LolA-lipoprotein complex in an ATP-dependent manner. In Pseudomonas syringae pv. tomato (strain ATCC BAA-871 / DC3000), this protein is Lipoprotein-releasing system ATP-binding protein LolD.